The primary structure comprises 581 residues: Arginine--tRNA ligase (581 aa).

The 'HIGH' region signature appears at 131-141; sequence ANPTGPMHVGH.

The protein belongs to the class-I aminoacyl-tRNA synthetase family. In terms of assembly, monomer.

It is found in the cytoplasm. The catalysed reaction is tRNA(Arg) + L-arginine + ATP = L-arginyl-tRNA(Arg) + AMP + diphosphate. In Paracoccus denitrificans (strain Pd 1222), this protein is Arginine--tRNA ligase.